The sequence spans 255 residues: Adenosylcobinamide-GDP ribazoletransferase (255 aa).

7 consecutive transmembrane segments (helical) span residues 33–53 (IFLPAYGLVTGGILALIIELF), 57–77 (FPGFFWAGVIIAGQIYLSGAL), 107–127 (VGSMAVAFFGAFLILKYGSYA), 136–156 (FTVLISEIILRGTGYLVIYSF), 174–194 (AGLIFTLGQTLIFTLGAAAFF), 196–216 (FSLIKILIILLLAYLFAFVVA), and 234–254 (IMELTGLFVPVAVLLINNIGV).

Belongs to the CobS family. It depends on Mg(2+) as a cofactor.

It localises to the cell membrane. It catalyses the reaction alpha-ribazole + adenosylcob(III)inamide-GDP = adenosylcob(III)alamin + GMP + H(+). The enzyme catalyses alpha-ribazole 5'-phosphate + adenosylcob(III)inamide-GDP = adenosylcob(III)alamin 5'-phosphate + GMP + H(+). It functions in the pathway cofactor biosynthesis; adenosylcobalamin biosynthesis; adenosylcobalamin from cob(II)yrinate a,c-diamide: step 7/7. Joins adenosylcobinamide-GDP and alpha-ribazole to generate adenosylcobalamin (Ado-cobalamin). Also synthesizes adenosylcobalamin 5'-phosphate from adenosylcobinamide-GDP and alpha-ribazole 5'-phosphate. This chain is Adenosylcobinamide-GDP ribazoletransferase, found in Carboxydothermus hydrogenoformans (strain ATCC BAA-161 / DSM 6008 / Z-2901).